A 249-amino-acid chain; its full sequence is ATP synthase subunit a (249 aa).

6 helical membrane passes run 30-50, 84-104, 113-133, 143-163, 196-216, and 221-241; these read SAYMLLAVAIISLLMIGGSAG, FFPLVFSLFMFIMVSNMVGII, HIIVTAALAFLVFFTVLIYGF, IFVPSGVPGFILPLVVFIEVF, LLAGLGIAGYFGAVLPLGMVV, and LELLVAFLQAYVFAILTCIYL.

It belongs to the ATPase A chain family. As to quaternary structure, F-type ATPases have 2 components, CF(1) - the catalytic core - and CF(0) - the membrane proton channel. CF(1) has five subunits: alpha(3), beta(3), gamma(1), delta(1), epsilon(1). CF(0) has four main subunits: a, b, b' and c.

Its subcellular location is the cell inner membrane. Key component of the proton channel; it plays a direct role in the translocation of protons across the membrane. The sequence is that of ATP synthase subunit a from Rhodopseudomonas palustris (strain BisA53).